The sequence spans 92 residues: MSDRIRAHVYVSGRVQGVYYRANTRDTARERDIDGWVRNLDDGRVEAVFEGPREAVESMVGWCHTGSPKARVESVDAAYDDPEGVDGFEIRR.

Residues 6 to 92 (RAHVYVSGRV…EGVDGFEIRR (87 aa)) form the Acylphosphatase-like domain. Catalysis depends on residues Arg-21 and Asn-39.

It belongs to the acylphosphatase family.

It catalyses the reaction an acyl phosphate + H2O = a carboxylate + phosphate + H(+). This chain is Acylphosphatase (acyP), found in Natronomonas pharaonis (strain ATCC 35678 / DSM 2160 / CIP 103997 / JCM 8858 / NBRC 14720 / NCIMB 2260 / Gabara) (Halobacterium pharaonis).